We begin with the raw amino-acid sequence, 528 residues long: Lanosterol 14-alpha demethylase (528 aa).

C470 is a binding site for heme.

The protein belongs to the cytochrome P450 family. It depends on heme as a cofactor.

It is found in the membrane. The catalysed reaction is a 14alpha-methyl steroid + 3 reduced [NADPH--hemoprotein reductase] + 3 O2 = a Delta(14) steroid + formate + 3 oxidized [NADPH--hemoprotein reductase] + 4 H2O + 4 H(+). The enzyme catalyses a 14alpha-methyl steroid + reduced [NADPH--hemoprotein reductase] + O2 = a 14alpha-hydroxymethyl steroid + oxidized [NADPH--hemoprotein reductase] + H2O + H(+). It carries out the reaction a 14alpha-hydroxymethyl steroid + reduced [NADPH--hemoprotein reductase] + O2 = a 14alpha-formyl steroid + oxidized [NADPH--hemoprotein reductase] + 2 H2O + H(+). It catalyses the reaction a 14alpha-formyl steroid + reduced [NADPH--hemoprotein reductase] + O2 = a Delta(14) steroid + formate + oxidized [NADPH--hemoprotein reductase] + H2O + 2 H(+). The catalysed reaction is lanosterol + 3 reduced [NADPH--hemoprotein reductase] + 3 O2 = 4,4-dimethyl-5alpha-cholesta-8,14,24-trien-3beta-ol + formate + 3 oxidized [NADPH--hemoprotein reductase] + 4 H2O + 4 H(+). The enzyme catalyses lanosterol + reduced [NADPH--hemoprotein reductase] + O2 = 32-hydroxylanosterol + oxidized [NADPH--hemoprotein reductase] + H2O + H(+). It carries out the reaction 32-hydroxylanosterol + reduced [NADPH--hemoprotein reductase] + O2 = 32-oxolanosterol + oxidized [NADPH--hemoprotein reductase] + 2 H2O + H(+). It catalyses the reaction 32-oxolanosterol + reduced [NADPH--hemoprotein reductase] + O2 = 4,4-dimethyl-5alpha-cholesta-8,14,24-trien-3beta-ol + formate + oxidized [NADPH--hemoprotein reductase] + H2O + 2 H(+). The catalysed reaction is eburicol + 3 reduced [NADPH--hemoprotein reductase] + 3 O2 = 14-demethyleburicol + formate + 3 oxidized [NADPH--hemoprotein reductase] + 4 H2O + 4 H(+). The enzyme catalyses eburicol + reduced [NADPH--hemoprotein reductase] + O2 = 32-hydroxyeburicol + oxidized [NADPH--hemoprotein reductase] + H2O + H(+). It carries out the reaction 32-hydroxyeburicol + reduced [NADPH--hemoprotein reductase] + O2 = 32-oxoeburicol + oxidized [NADPH--hemoprotein reductase] + 2 H2O + H(+). It catalyses the reaction 32-oxoeburicol + reduced [NADPH--hemoprotein reductase] + O2 = 14-demethyleburicol + formate + oxidized [NADPH--hemoprotein reductase] + H2O + 2 H(+). Its pathway is steroid biosynthesis; zymosterol biosynthesis; zymosterol from lanosterol: step 1/6. In terms of biological role, sterol 14alpha-demethylase that plays a critical role in the third module of ergosterol biosynthesis pathway, being ergosterol the major sterol component in fungal membranes that participates in a variety of functions. The third module or late pathway involves the ergosterol synthesis itself through consecutive reactions that mainly occur in the endoplasmic reticulum (ER) membrane. In filamentous fungi, during the initial step of this module, lanosterol (lanosta-8,24-dien-3beta-ol) can be metabolized to eburicol. Sterol 14alpha-demethylase catalyzes the three-step oxidative removal of the 14alpha-methyl group (C-32) of both these sterols in the form of formate, and converts eburicol and lanosterol to 14-demethyleburicol (4,4,24-trimethylergosta-8,14,24(28)-trienol) and 4,4-dimethyl-5alpha-cholesta-8,14,24-trien-3beta-ol, respectively, which are further metabolized by other enzymes in the pathway to ergosterol. Can also use substrates not intrinsic to fungi, such as 24,25-dihydrolanosterol (DHL), producing 4,4-dimethyl-8,14-cholestadien-3-beta-ol, but at lower rates than the endogenous substrates. The chain is Lanosterol 14-alpha demethylase (ERG11) from Candida tropicalis (Yeast).